Reading from the N-terminus, the 184-residue chain is Peptide deformylase 2 (184 aa).

Residues Cys-110 and His-153 each contribute to the Fe cation site. Residue Glu-154 is part of the active site. His-157 is a Fe cation binding site.

Belongs to the polypeptide deformylase family. Fe(2+) is required as a cofactor.

It carries out the reaction N-terminal N-formyl-L-methionyl-[peptide] + H2O = N-terminal L-methionyl-[peptide] + formate. Removes the formyl group from the N-terminal Met of newly synthesized proteins. Requires at least a dipeptide for an efficient rate of reaction. N-terminal L-methionine is a prerequisite for activity but the enzyme has broad specificity at other positions. The sequence is that of Peptide deformylase 2 from Geobacillus stearothermophilus (Bacillus stearothermophilus).